Reading from the N-terminus, the 464-residue chain is GTPase Der (464 aa).

2 consecutive EngA-type G domains span residues 3 to 166 and 178 to 351; these read PVIA…PEVE and IRIA…DSAF. GTP contacts are provided by residues 9 to 16, 56 to 60, 118 to 121, 184 to 191, 231 to 235, and 296 to 299; these read GRPNVGKS, DTGGL, NKTD, GRPNAGKS, DTAGV, and NKWD. A KH-like domain is found at 352–436; the sequence is IKVSTNHLTK…PIRLEFKTGE (85 aa).

Belongs to the TRAFAC class TrmE-Era-EngA-EngB-Septin-like GTPase superfamily. EngA (Der) GTPase family. As to quaternary structure, associates with the 50S ribosomal subunit.

GTPase that plays an essential role in the late steps of ribosome biogenesis. In Thioalkalivibrio sulfidiphilus (strain HL-EbGR7), this protein is GTPase Der.